Consider the following 1383-residue polypeptide: DNA-directed RNA polymerase subunit beta (1383 aa).

The protein belongs to the RNA polymerase beta chain family. As to quaternary structure, the RNAP catalytic core consists of 2 alpha, 1 beta, 1 beta' and 1 omega subunit. When a sigma factor is associated with the core the holoenzyme is formed, which can initiate transcription.

The enzyme catalyses RNA(n) + a ribonucleoside 5'-triphosphate = RNA(n+1) + diphosphate. In terms of biological role, DNA-dependent RNA polymerase catalyzes the transcription of DNA into RNA using the four ribonucleoside triphosphates as substrates. The polypeptide is DNA-directed RNA polymerase subunit beta (Xanthomonas oryzae pv. oryzae (strain MAFF 311018)).